The sequence spans 397 residues: Beta sliding clamp (397 aa).

The protein belongs to the beta sliding clamp family. In terms of assembly, forms a ring-shaped head-to-tail homodimer around DNA which binds and tethers DNA polymerases and other proteins to the DNA. The DNA replisome complex has a single clamp-loading complex (3 tau and 1 each of delta, delta', psi and chi subunits) which binds 3 Pol III cores (1 core on the leading strand and 2 on the lagging strand) each with a beta sliding clamp dimer. Additional proteins in the replisome are other copies of gamma, psi and chi, Ssb, DNA helicase and RNA primase.

It is found in the cytoplasm. Its function is as follows. Confers DNA tethering and processivity to DNA polymerases and other proteins. Acts as a clamp, forming a ring around DNA (a reaction catalyzed by the clamp-loading complex) which diffuses in an ATP-independent manner freely and bidirectionally along dsDNA. Initially characterized for its ability to contact the catalytic subunit of DNA polymerase III (Pol III), a complex, multichain enzyme responsible for most of the replicative synthesis in bacteria; Pol III exhibits 3'-5' exonuclease proofreading activity. The beta chain is required for initiation of replication as well as for processivity of DNA replication. The chain is Beta sliding clamp (dnaN) from Mycolicibacterium smegmatis (strain ATCC 700084 / mc(2)155) (Mycobacterium smegmatis).